The following is a 240-amino-acid chain: Probable septum site-determining protein MinC (240 aa).

The protein belongs to the MinC family. Interacts with MinD and FtsZ.

In terms of biological role, cell division inhibitor that blocks the formation of polar Z ring septums. Rapidly oscillates between the poles of the cell to destabilize FtsZ filaments that have formed before they mature into polar Z rings. Prevents FtsZ polymerization. This chain is Probable septum site-determining protein MinC, found in Chromobacterium violaceum (strain ATCC 12472 / DSM 30191 / JCM 1249 / CCUG 213 / NBRC 12614 / NCIMB 9131 / NCTC 9757 / MK).